The sequence spans 129 residues: Small ribosomal subunit protein uS8 (129 aa).

It belongs to the universal ribosomal protein uS8 family. In terms of assembly, part of the 30S ribosomal subunit. Contacts proteins S5 and S12.

In terms of biological role, one of the primary rRNA binding proteins, it binds directly to 16S rRNA central domain where it helps coordinate assembly of the platform of the 30S subunit. This is Small ribosomal subunit protein uS8 from Legionella pneumophila (strain Corby).